The primary structure comprises 118 residues: Large ribosomal subunit protein bL20 (118 aa).

It belongs to the bacterial ribosomal protein bL20 family.

In terms of biological role, binds directly to 23S ribosomal RNA and is necessary for the in vitro assembly process of the 50S ribosomal subunit. It is not involved in the protein synthesizing functions of that subunit. The sequence is that of Large ribosomal subunit protein bL20 from Desulfotalea psychrophila (strain LSv54 / DSM 12343).